The following is a 194-amino-acid chain: Segregation and condensation protein B (194 aa).

The protein belongs to the ScpB family. Homodimer. Homodimerization may be required to stabilize the binding of ScpA to the Smc head domains. Component of a cohesin-like complex composed of ScpA, ScpB and the Smc homodimer, in which ScpA and ScpB bind to the head domain of Smc. The presence of the three proteins is required for the association of the complex with DNA.

It localises to the cytoplasm. Functionally, participates in chromosomal partition during cell division. May act via the formation of a condensin-like complex containing Smc and ScpA that pull DNA away from mid-cell into both cell halves. This is Segregation and condensation protein B from Streptococcus agalactiae serotype Ia (strain ATCC 27591 / A909 / CDC SS700).